Consider the following 560-residue polypeptide: Eukaryotic translation initiation factor 3 subunit D-1 (560 aa).

The disordered stretch occupies residues 98–166 (VQKPPHQRGR…RGPPPKMRES (69 aa)). The span at 100–121 (KPPHQRGRFRNMRNSRSGRGRN) shows a compositional bias: basic residues. Residue Thr128 is modified to Phosphothreonine. The span at 147–156 (GRGMGKKFGH) shows a compositional bias: basic residues. The interval 291-305 (EFDLLTVNESSVEPP) is RNA gate.

The protein belongs to the eIF-3 subunit D family. As to quaternary structure, component of the eukaryotic translation initiation factor 3 (eIF-3) complex. The eIF-3 complex interacts with pix.

The protein localises to the cytoplasm. In terms of biological role, mRNA cap-binding component of the eukaryotic translation initiation factor 3 (eIF-3) complex, which is involved in protein synthesis of a specialized repertoire of mRNAs and, together with other initiation factors, stimulates binding of mRNA and methionyl-tRNAi to the 40S ribosome. The eIF-3 complex specifically targets and initiates translation of a subset of mRNAs involved in cell proliferation. In the eIF-3 complex, eif3d specifically recognizes and binds the 7-methylguanosine cap of a subset of mRNAs. The sequence is that of Eukaryotic translation initiation factor 3 subunit D-1 from Drosophila simulans (Fruit fly).